The sequence spans 639 residues: MAPKPPAGTSSRAWEAVSPSLSEWVLDAVASWGFSKMTPVQASAIPLFMAHKDVVVEAVTGSGKTLSFLVPVVEKLLRLEEPIKKHHIGAIIISPTRELASQIHQVLLSLLAFHPPSAAAIKPPGEDDAPREKFSASTLKVVPQLLLGGSTTPAEDLSYFLKHSPNVLISTPGRLLELLSSPHVHCPQSSFEMLVLDEADRLLDLGFKETLQNILRRLPKQRRTGLFSASISEAVDQIVRVGLRNPVKVLVKVKGTSGVQDKRTPASLQMTYLTTPPAHKFLTLRPILTSLQPTPQKTIFFVSTCSGVDYLAAILPLLLGDDFQLIPLHGKHPANVRQKNFNRFINAHTPSILLTTDVASRGLDIPSVDLVVQIDPPSDPKTFIHRCGRAGRAGRRGVSVVLLHPGREEDYVSFLEVRKTPVTPFPHPISISDSDASTATEAARKIIKQDRALHDRGQKAFVSWLRSYSKHQASSIFRVADLDWEALGHAWGLLKLPKMPELRNFTGDRTLGVDLDWENYAYKDKQREKRRKEVLQESAEAGAQQTSNKRRASESVAWSNKVDQKNKKQKRREQKHLQQEKRRWEKMTEEEKQKARETQKMLEEIRQKNEEARALRRAEKAAGKAADNDGDDDEFEGFD.

Positions 14 to 42 (WEAVSPSLSEWVLDAVASWGFSKMTPVQA) match the Q motif motif. The Helicase ATP-binding domain maps to 45 to 249 (IPLFMAHKDV…RVGLRNPVKV (205 aa)). Residue 58–65 (AVTGSGKT) participates in ATP binding. Residues 197–200 (DEAD) carry the DEAD box motif. The Helicase C-terminal domain maps to 283–437 (TLRPILTSLQ…PISISDSDAS (155 aa)). Residues 521-624 (AYKDKQREKR…LRRAEKAAGK (104 aa)) are a coiled coil. A disordered region spans residues 536–639 (QESAEAGAQQ…GDDDEFEGFD (104 aa)). Residues 575-622 (KHLQQEKRRWEKMTEEEKQKARETQKMLEEIRQKNEEARALRRAEKAA) show a composition bias toward basic and acidic residues. The span at 628–639 (NDGDDDEFEGFD) shows a compositional bias: acidic residues.

It belongs to the DEAD box helicase family. DDX55/SPB4 subfamily. Component of pre-60S ribosomal complexes.

It localises to the nucleus. The protein localises to the nucleolus. It catalyses the reaction ATP + H2O = ADP + phosphate + H(+). In terms of biological role, ATP-binding RNA helicase involved in the biogenesis of 60S ribosomal subunits. Binds 90S pre-ribosomal particles and dissociates from pre-60S ribosomal particles after processing of 27SB pre-rRNA. Required for the normal formation of 18S rRNA through the processing of pre-rRNAs at sites A0, A1 and A2, and the normal formation of 25S and 5.8S rRNAs through the processing of pre-rRNAs at sites C1 and C2. This chain is ATP-dependent rRNA helicase spb4, found in Aspergillus terreus (strain NIH 2624 / FGSC A1156).